Consider the following 359-residue polypeptide: Fructose-bisphosphate aldolase (359 aa).

Position 11 is a phosphothreonine (T11). K27 participates in a covalent cross-link: Glycyl lysine isopeptide (Lys-Gly) (interchain with G-Cter in ubiquitin). S56 and S63 each carry phosphoserine. D-glyceraldehyde 3-phosphate is bound at residue S63. K73 is covalently cross-linked (Glycyl lysine isopeptide (Lys-Gly) (interchain with G-Cter in ubiquitin)). Phosphoserine occurs at positions 76 and 83. K85 is covalently cross-linked (Glycyl lysine isopeptide (Lys-Gly) (interchain with G-Cter in ubiquitin)). S96 bears the Phosphoserine mark. The active-site Proton donor is the D110. The Zn(2+) site is built by H111 and D145. S147 bears the Phosphoserine mark. Position 150 is a phosphothreonine (T150). Residue E175 participates in Zn(2+) binding. T179 carries the phosphothreonine modification. H227 contacts Zn(2+). G228 lines the dihydroxyacetone phosphate pocket. Position 265 (H265) interacts with Zn(2+). Residues 266-268 and 287-290 contribute to the dihydroxyacetone phosphate site; these read GGS and NLDT. S268 is modified (phosphoserine). T290 carries the phosphothreonine modification. A Glycyl lysine isopeptide (Lys-Gly) (interchain with G-Cter in ubiquitin) cross-link involves residue K308. Y310 bears the Phosphotyrosine mark. S313 bears the Phosphoserine mark.

The protein belongs to the class II fructose-bisphosphate aldolase family. As to quaternary structure, homodimer. It depends on Zn(2+) as a cofactor.

The enzyme catalyses beta-D-fructose 1,6-bisphosphate = D-glyceraldehyde 3-phosphate + dihydroxyacetone phosphate. The protein operates within carbohydrate degradation; glycolysis; D-glyceraldehyde 3-phosphate and glycerone phosphate from D-glucose: step 4/4. Its function is as follows. Catalyzes the aldol condensation of dihydroxyacetone phosphate (DHAP or glycerone-phosphate) with glyceraldehyde 3-phosphate (G3P) to form fructose 1,6-bisphosphate (FBP) in gluconeogenesis and the reverse reaction in glycolysis. This chain is Fructose-bisphosphate aldolase (FBA1), found in Saccharomyces cerevisiae (strain ATCC 204508 / S288c) (Baker's yeast).